The following is a 520-amino-acid chain: Transposase for insertion sequence element IS21-like (520 aa).

The region spanning 13 to 78 (YMWYKVRELQ…KYEEYVRGTL (66 aa)) is the HTH IS21-type domain. The region spanning 136–312 (LPETPYGEYA…VPSEEFAVEK (177 aa)) is the Integrase catalytic domain.

Belongs to the transposase IS21/IS408/IS1162 family.

Involved in the transposition of the insertion sequence. The sequence is that of Transposase for insertion sequence element IS21-like (tnpA) from Bacteroides fragilis.